Consider the following 743-residue polypeptide: Alpha-N-acetylglucosaminidase (743 aa).

Residues 1–23 form the signal peptide; the sequence is MEAVAVAAAVGVLLLAGAGGAAG. 6 N-linked (GlcNAc...) asparagine glycosylation sites follow: Asn261, Asn272, Asn435, Asn503, Asn526, and Asn532.

It belongs to the glycosyl hydrolase 89 family. In terms of assembly, monomer and homodimer. Liver, ovary, peripheral blood leukocytes, testis, prostate, spleen, colon, lung, placenta and kidney.

The protein localises to the lysosome. The enzyme catalyses Hydrolysis of terminal non-reducing N-acetyl-D-glucosamine residues in N-acetyl-alpha-D-glucosaminides.. Involved in the degradation of heparan sulfate. The sequence is that of Alpha-N-acetylglucosaminidase (NAGLU) from Homo sapiens (Human).